We begin with the raw amino-acid sequence, 612 residues long: Zinc metalloproteinase-disintegrin-like 8 (612 aa).

A signal peptide spans 1-20; that stretch reads MIQVLLVTICLAVFPYQGSS. The propeptide occupies 21 to 189; it reads IILGSGNVND…KKASQLNLTP (169 aa). A Peptidase M12B domain is found at 199-395; it reads KYIELVIVAD…NRPPCILNKP (197 aa). Glutamate 202 serves as a coordination point for Ca(2+). A glycan (N-linked (GlcNAc...) asparagine) is linked at asparagine 218. Ca(2+) is bound at residue aspartate 286. Disulfide bonds link cysteine 310–cysteine 390, cysteine 350–cysteine 374, and cysteine 352–cysteine 357. Histidine 335 serves as a coordination point for Zn(2+). The active site involves glutamate 336. Residues histidine 339 and histidine 345 each contribute to the Zn(2+) site. Ca(2+) contacts are provided by cysteine 390, asparagine 393, valine 405, asparagine 408, phenylalanine 410, glutamate 412, glutamate 415, and aspartate 418. One can recognise a Disintegrin domain in the interval 403 to 489; that stretch reads PPVCGNYFVE…DCPTDDFQRN (87 aa). 14 disulfides stabilise this stretch: cysteine 406-cysteine 435, cysteine 417-cysteine 430, cysteine 419-cysteine 425, cysteine 429-cysteine 452, cysteine 443-cysteine 449, cysteine 448-cysteine 474, cysteine 461-cysteine 481, cysteine 468-cysteine 500, cysteine 493-cysteine 505, cysteine 512-cysteine 562, cysteine 527-cysteine 573, cysteine 540-cysteine 550, cysteine 557-cysteine 599, and cysteine 593-cysteine 605. Residues 467–469 carry the D/ECD-tripeptide motif; sequence ECD. An N-linked (GlcNAc...) asparagine glycan is attached at asparagine 502.

This sequence belongs to the venom metalloproteinase (M12B) family. P-III subfamily. It depends on Zn(2+) as a cofactor. Expressed by the venom gland.

The protein localises to the secreted. Functionally, snake venom metalloproteinase that impairs hemostasis in the envenomed animal. The protein is Zinc metalloproteinase-disintegrin-like 8 of Crotalus adamanteus (Eastern diamondback rattlesnake).